A 29-amino-acid chain; its full sequence is Cytochrome b6-f complex subunit 8 (29 aa).

Residues I3–V23 traverse the membrane as a helical segment.

It belongs to the PetN family. The 4 large subunits of the cytochrome b6-f complex are cytochrome b6, subunit IV (17 kDa polypeptide, PetD), cytochrome f and the Rieske protein, while the 4 small subunits are PetG, PetL, PetM and PetN. The complex functions as a dimer.

It is found in the plastid. The protein localises to the chloroplast thylakoid membrane. In terms of biological role, component of the cytochrome b6-f complex, which mediates electron transfer between photosystem II (PSII) and photosystem I (PSI), cyclic electron flow around PSI, and state transitions. This Coffea arabica (Arabian coffee) protein is Cytochrome b6-f complex subunit 8.